A 258-amino-acid polypeptide reads, in one-letter code: Snake venom serine protease CL2 (258 aa).

Residues 1-18 (MVLIRVLANLLIIQLSYA) form the signal peptide. The propeptide occupies 19–24 (QKSSEL). In terms of domain architecture, Peptidase S1 spans 25 to 249 (VIGGDECNIN…YTDWIKSIIA (225 aa)). Intrachain disulfides connect Cys-31-Cys-163, Cys-50-Cys-66, Cys-98-Cys-256, Cys-142-Cys-210, Cys-174-Cys-189, and Cys-200-Cys-225. Residue Asn-44 is glycosylated (N-linked (GlcNAc...) asparagine). The Charge relay system role is filled by His-65. Asn-103 is a glycosylation site (N-linked (GlcNAc...) asparagine). The Charge relay system role is filled by Asp-110. Asn-121 carries an N-linked (GlcNAc...) asparagine glycan. Catalysis depends on Ser-204, which acts as the Charge relay system. Asn-251 carries N-linked (GlcNAc...) asparagine glycosylation.

Belongs to the peptidase S1 family. Snake venom subfamily. Monomer. In terms of tissue distribution, expressed by the venom gland.

It is found in the secreted. Functionally, snake venom serine protease that may act in the hemostasis system of the prey. This Trimeresurus stejnegeri (Chinese green tree viper) protein is Snake venom serine protease CL2.